The following is a 185-amino-acid chain: NEDD8-conjugating enzyme UBE2F (185 aa).

Residues 1-21 (MLTLASKLKRDDGVKGSRTTS) form a disordered region. The tract at residues 1–29 (MLTLASKLKRDDGVKGSRTTSTTLDSMRR) is interaction with uba3. The UBC core domain maps to 32–185 (VRDRLLVKEV…VEDYIKRYAR (154 aa)). Cysteine 116 serves as the catalytic Glycyl thioester intermediate.

Belongs to the ubiquitin-conjugating enzyme family. UBE2F subfamily.

It catalyses the reaction [E1 NEDD8-activating enzyme]-S-[NEDD8 protein]-yl-L-cysteine + [E2 NEDD8-conjugating enzyme]-L-cysteine = [E1 NEDD8-activating enzyme]-L-cysteine + [E2 NEDD8-conjugating enzyme]-S-[NEDD8-protein]-yl-L-cysteine.. It functions in the pathway protein modification; protein neddylation. Functionally, accepts the ubiquitin-like protein NEDD8 from the UBA3-NAE1 E1 complex and catalyzes its covalent attachment to other proteins. Together with the E3 ubiquitin ligase rnf7/rbx2, specifically neddylates cullin-5 (cul5). Does not neddylate cul1, cul2, cul3, cul4a or cul4b. This is NEDD8-conjugating enzyme UBE2F (ube2f) from Xenopus laevis (African clawed frog).